The sequence spans 456 residues: Putative dihydroorotase (456 aa).

Belongs to the metallo-dependent hydrolases superfamily. DHOase family. Class I DHOase subfamily.

It catalyses the reaction (S)-dihydroorotate + H2O = N-carbamoyl-L-aspartate + H(+). It functions in the pathway pyrimidine metabolism; UMP biosynthesis via de novo pathway; (S)-dihydroorotate from bicarbonate: step 3/3. Its function is as follows. Catalyzes the reversible cyclization of carbamoyl aspartate to dihydroorotate. The protein is Putative dihydroorotase of Rhodopirellula baltica (strain DSM 10527 / NCIMB 13988 / SH1).